The following is a 707-amino-acid chain: Alpha-hemolysin translocation ATP-binding protein HlyB (707 aa).

The Peptidase C39 domain maps to 2-125 (DFHHKNNYGL…DLYQGNIILI (124 aa)). H83 is an active-site residue. Residues 154 to 436 (FIETLIVSVF…LAQLWQDFQQ (283 aa)) form the ABC transmembrane type-1 domain. Transmembrane regions (helical) follow at residues 158 to 178 (LIVS…FQVV), 191 to 211 (LNII…LSGL), 269 to 289 (ALTS…MWYY), 295 to 315 (LVIL…SPIL), and 387 to 407 (AVMI…DLSI). The 236-residue stretch at 468-703 (ISFRNIRFRY…PESLYHYLHQ (236 aa)) folds into the ABC transporter domain. 502 to 509 (GRSGSGKS) provides a ligand contact to ATP.

Belongs to the ABC transporter superfamily. Protein-1 exporter (TC 3.A.1.109) family.

Its subcellular location is the cell membrane. Involved in the export of hemolysin A. The polypeptide is Alpha-hemolysin translocation ATP-binding protein HlyB (hlyB) (Proteus vulgaris).